Consider the following 346-residue polypeptide: NADH-ubiquinone oxidoreductase chain 2 (346 aa).

Transmembrane regions (helical) follow at residues 25-45, 56-76, 94-114, 122-142, 148-168, 178-198, 200-220, 240-260, 278-298, and 325-345; these read NLLL…PLLA, ATKY…VIIL, LLNM…FHYW, IPLH…LSIL, LLNP…GAWG, IMAY…PYNP, LTLL…ITLM, ILTM…LTGF, LSTL…RLIY, and FILP…SQLI.

Belongs to the complex I subunit 2 family. In terms of assembly, core subunit of respiratory chain NADH dehydrogenase (Complex I) which is composed of 45 different subunits. Interacts with TMEM242.

It localises to the mitochondrion inner membrane. The catalysed reaction is a ubiquinone + NADH + 5 H(+)(in) = a ubiquinol + NAD(+) + 4 H(+)(out). In terms of biological role, core subunit of the mitochondrial membrane respiratory chain NADH dehydrogenase (Complex I) which catalyzes electron transfer from NADH through the respiratory chain, using ubiquinone as an electron acceptor. Essential for the catalytic activity and assembly of complex I. The polypeptide is NADH-ubiquinone oxidoreductase chain 2 (Rattus norvegicus (Rat)).